The sequence spans 31 residues: Cytochrome b6-f complex subunit 6 (31 aa).

Residues 3–23 (VFLGYIIFLAAFFGLATGLFL) traverse the membrane as a helical segment.

The protein belongs to the PetL family. As to quaternary structure, the 4 large subunits of the cytochrome b6-f complex are cytochrome b6, subunit IV (17 kDa polypeptide, PetD), cytochrome f and the Rieske protein, while the 4 small subunits are PetG, PetL, PetM and PetN. The complex functions as a dimer.

It is found in the plastid. It localises to the chloroplast thylakoid membrane. Functionally, component of the cytochrome b6-f complex, which mediates electron transfer between photosystem II (PSII) and photosystem I (PSI), cyclic electron flow around PSI, and state transitions. PetL is important for photoautotrophic growth as well as for electron transfer efficiency and stability of the cytochrome b6-f complex. The sequence is that of Cytochrome b6-f complex subunit 6 from Pyropia yezoensis (Susabi-nori).